The sequence spans 3587 residues: Surfactin synthase subunit 1 (3587 aa).

3 Carrier domains span residues 971 to 1046 (APRN…DHRE), 2010 to 2085 (APRN…ASAE), and 3038 to 3112 (APTT…ERAE). Ser-1006, Ser-2045, and Ser-3073 each carry O-(pantetheine 4'-phosphoryl)serine.

It belongs to the ATP-dependent AMP-binding enzyme family. Pantetheine 4'-phosphate serves as cofactor.

Its pathway is antibiotic biosynthesis; surfactin biosynthesis. This protein is a multifunctional enzyme able to activate and polymerize the amino acids Leu, Glu, Asp and Val. Activation sites for these AA consist of individual domains. In Bacillus subtilis (strain 168), this protein is Surfactin synthase subunit 1 (srfAA).